The chain runs to 591 residues: Speriolin (591 aa).

Positions 1–42 form a coiled coil; it reads MSLLTNYEGLRHQIERLVRENEELKKLVRLIRENHELKSAIK. The necessary for targeting centrosomes stretch occupies residues 1–78; that stretch reads MSLLTNYEGL…NNGVFLPPSP (78 aa). Polar residues predominate over residues 302–314; the sequence is NTSDTQAQPSAAQ. Disordered stretches follow at residues 302 to 331 and 346 to 435; these read NTSD…TSPT and ATSY…ENPR. Positions 317 to 331 are enriched in low complexity; it reads VVPASVPTSPTTSPT. Composition is skewed to polar residues over residues 346–357 and 390–401; these read ATSYTPSSTTHI and PRTSSSPASVND.

This sequence belongs to the speriolin family. As to quaternary structure, found in a complex with CDC20, CDC27 and TUBG1. Interacts with CDC20. In terms of tissue distribution, detected only in testis.

It is found in the cytoplasm. The protein localises to the cytoskeleton. Its subcellular location is the microtubule organizing center. The protein resides in the centrosome. The chain is Speriolin (SPATC1) from Homo sapiens (Human).